The sequence spans 266 residues: 2-C-methyl-D-erythritol 4-phosphate cytidylyltransferase (266 aa).

The interval 229–266 (NRDCGPGTRDPESAHPQSSVSASAFSGPGSRAPGPEEI) is disordered. Residues 243–252 (HPQSSVSASA) are compositionally biased toward polar residues.

It belongs to the IspD/TarI cytidylyltransferase family. IspD subfamily.

It catalyses the reaction 2-C-methyl-D-erythritol 4-phosphate + CTP + H(+) = 4-CDP-2-C-methyl-D-erythritol + diphosphate. It functions in the pathway isoprenoid biosynthesis; isopentenyl diphosphate biosynthesis via DXP pathway; isopentenyl diphosphate from 1-deoxy-D-xylulose 5-phosphate: step 2/6. Its function is as follows. Catalyzes the formation of 4-diphosphocytidyl-2-C-methyl-D-erythritol from CTP and 2-C-methyl-D-erythritol 4-phosphate (MEP). The polypeptide is 2-C-methyl-D-erythritol 4-phosphate cytidylyltransferase (Xanthomonas axonopodis pv. citri (strain 306)).